The following is a 184-amino-acid chain: UPF0398 protein BALH_1408 (184 aa).

The protein belongs to the UPF0398 family.

In Bacillus thuringiensis (strain Al Hakam), this protein is UPF0398 protein BALH_1408.